The following is a 494-amino-acid chain: tRNA-2-methylthio-N(6)-dimethylallyladenosine synthase (494 aa).

In terms of domain architecture, MTTase N-terminal spans 4–120 (RSYQVRTFGC…LPVLLERARH (117 aa)). 6 residues coordinate [4Fe-4S] cluster: C13, C49, C83, C157, C161, and C164. The 232-residue stretch at 143–374 (RASHHSAWVS…SLQDEMSWAE (232 aa)) folds into the Radical SAM core domain. The TRAM domain maps to 376–449 (RAQVGRRVEI…PHHLTADGPL (74 aa)). A disordered region spans residues 465 to 494 (RAIAGDTPRPDRPAVSLGMPQLRPSAPAAR).

It belongs to the methylthiotransferase family. MiaB subfamily. As to quaternary structure, monomer. Requires [4Fe-4S] cluster as cofactor.

It localises to the cytoplasm. It carries out the reaction N(6)-dimethylallyladenosine(37) in tRNA + (sulfur carrier)-SH + AH2 + 2 S-adenosyl-L-methionine = 2-methylsulfanyl-N(6)-dimethylallyladenosine(37) in tRNA + (sulfur carrier)-H + 5'-deoxyadenosine + L-methionine + A + S-adenosyl-L-homocysteine + 2 H(+). Functionally, catalyzes the methylthiolation of N6-(dimethylallyl)adenosine (i(6)A), leading to the formation of 2-methylthio-N6-(dimethylallyl)adenosine (ms(2)i(6)A) at position 37 in tRNAs that read codons beginning with uridine. The protein is tRNA-2-methylthio-N(6)-dimethylallyladenosine synthase of Parafrankia sp. (strain EAN1pec).